The primary structure comprises 114 residues: Protein gamma (114 aa).

The polypeptide is Protein gamma (gamma) (Bovine ephemeral fever virus (strain BB7721) (BEFV)).